The sequence spans 487 residues: Betaine aldehyde dehydrogenase (487 aa).

Residues serine 26 and aspartate 93 each coordinate K(+). Residue 150 to 152 (GAW) coordinates NAD(+). Lysine 162 functions as the Charge relay system in the catalytic mechanism. NAD(+)-binding positions include 176 to 179 (KPSE) and 229 to 232 (SVPT). Residue leucine 244 coordinates K(+). Glutamate 250 (proton acceptor) is an active-site residue. NAD(+) contacts are provided by glycine 252, cysteine 284, and glutamate 384. The active-site Nucleophile is cysteine 284. Cysteine 284 is modified (cysteine sulfenic acid (-SOH)). Residues lysine 454 and glycine 457 each contribute to the K(+) site. Glutamate 461 serves as the catalytic Charge relay system.

This sequence belongs to the aldehyde dehydrogenase family. As to quaternary structure, dimer of dimers. It depends on K(+) as a cofactor.

The catalysed reaction is betaine aldehyde + NAD(+) + H2O = glycine betaine + NADH + 2 H(+). Its pathway is amine and polyamine biosynthesis; betaine biosynthesis via choline pathway; betaine from betaine aldehyde: step 1/1. Involved in the biosynthesis of the osmoprotectant glycine betaine. Catalyzes the irreversible oxidation of betaine aldehyde to the corresponding acid. The sequence is that of Betaine aldehyde dehydrogenase from Rhizobium leguminosarum bv. trifolii (strain WSM2304).